The following is a 1836-amino-acid chain: Druantia protein DruE (1836 aa).

One can recognise a Helicase ATP-binding domain in the interval 108 to 405 (SFLGEDASDL…FAQDLTGLSP (298 aa)). ATP is bound at residue 121 to 128 (TGTGSGKT). Positions 347-350 (DEAH) match the DEAH box motif. The region spanning 1014–1199 (DCTALMPFAL…EVKVNNPKIA (186 aa)) is the Helicase C-terminal domain.

The protein resides in the cytoplasm. Functionally, component of antiviral defense system Druantia type I, composed of DruA, DruB, DruC, DruD and DruE. Expression of Druantia in E.coli (strain MG1655) confers resistance to phage lambda, SECphi18, SECphi27 and T4. This protein is probably a helicase. The chain is Druantia protein DruE from Escherichia coli (strain UMEA 4076-1).